Reading from the N-terminus, the 252-residue chain is Trans-aconitate 2-methyltransferase (252 aa).

This sequence belongs to the methyltransferase superfamily. Tam family.

It is found in the cytoplasm. The catalysed reaction is trans-aconitate + S-adenosyl-L-methionine = (E)-3-(methoxycarbonyl)pent-2-enedioate + S-adenosyl-L-homocysteine. Catalyzes the S-adenosylmethionine monomethyl esterification of trans-aconitate. In Escherichia coli O9:H4 (strain HS), this protein is Trans-aconitate 2-methyltransferase.